The following is a 184-amino-acid chain: dITP/XTP pyrophosphatase (184 aa).

8–13 contacts substrate; that stretch reads TGNKGK. Residues glutamate 37 and aspartate 66 each coordinate Mg(2+). Residue aspartate 66 is the Proton acceptor of the active site. Substrate-binding positions include serine 67, 142–145, lysine 163, and 168–169; these read FGYD and HR.

This sequence belongs to the HAM1 NTPase family. As to quaternary structure, homodimer. Mg(2+) serves as cofactor.

The catalysed reaction is XTP + H2O = XMP + diphosphate + H(+). The enzyme catalyses dITP + H2O = dIMP + diphosphate + H(+). It carries out the reaction ITP + H2O = IMP + diphosphate + H(+). Pyrophosphatase that catalyzes the hydrolysis of nucleoside triphosphates to their monophosphate derivatives, with a high preference for the non-canonical purine nucleotides XTP (xanthosine triphosphate), dITP (deoxyinosine triphosphate) and ITP. Seems to function as a house-cleaning enzyme that removes non-canonical purine nucleotides from the nucleotide pool, thus preventing their incorporation into DNA/RNA and avoiding chromosomal lesions. The sequence is that of dITP/XTP pyrophosphatase from Methanosarcina mazei (strain ATCC BAA-159 / DSM 3647 / Goe1 / Go1 / JCM 11833 / OCM 88) (Methanosarcina frisia).